Reading from the N-terminus, the 521-residue chain is Bifunctional purine biosynthesis protein PurH (521 aa).

In terms of domain architecture, MGS-like spans 1 to 147 (MAKISRALIS…KNNADVTVLV (147 aa)).

This sequence belongs to the PurH family.

It catalyses the reaction (6R)-10-formyltetrahydrofolate + 5-amino-1-(5-phospho-beta-D-ribosyl)imidazole-4-carboxamide = 5-formamido-1-(5-phospho-D-ribosyl)imidazole-4-carboxamide + (6S)-5,6,7,8-tetrahydrofolate. It carries out the reaction IMP + H2O = 5-formamido-1-(5-phospho-D-ribosyl)imidazole-4-carboxamide. Its pathway is purine metabolism; IMP biosynthesis via de novo pathway; 5-formamido-1-(5-phospho-D-ribosyl)imidazole-4-carboxamide from 5-amino-1-(5-phospho-D-ribosyl)imidazole-4-carboxamide (10-formyl THF route): step 1/1. It functions in the pathway purine metabolism; IMP biosynthesis via de novo pathway; IMP from 5-formamido-1-(5-phospho-D-ribosyl)imidazole-4-carboxamide: step 1/1. In Geotalea daltonii (strain DSM 22248 / JCM 15807 / FRC-32) (Geobacter daltonii), this protein is Bifunctional purine biosynthesis protein PurH.